A 78-amino-acid polypeptide reads, in one-letter code: Large ribosomal subunit protein uL29 (78 aa).

A disordered region spans residues 59 to 78; it reads VESERKRGKSLSSTQTQKEE. The span at 68-78 shows a compositional bias: polar residues; that stretch reads SLSSTQTQKEE.

Belongs to the universal ribosomal protein uL29 family.

The chain is Large ribosomal subunit protein uL29 from Synechococcus sp. (strain JA-3-3Ab) (Cyanobacteria bacterium Yellowstone A-Prime).